We begin with the raw amino-acid sequence, 113 residues long: Insulin (113 aa).

The signal sequence occupies residues Met-1–Ala-24. 3 disulfides stabilise this stretch: Cys-32-Cys-99, Cys-44-Cys-112, and Cys-98-Cys-103. The propeptide at Asp-56–Val-90 is c peptide.

It belongs to the insulin family. Heterodimer of a B chain and an A chain linked by two disulfide bonds.

The protein localises to the secreted. Functionally, insulin decreases blood glucose concentration. It increases cell permeability to monosaccharides, amino acids and fatty acids. It accelerates glycolysis, the pentose phosphate cycle, and glycogen synthesis in liver. In Oreochromis niloticus (Nile tilapia), this protein is Insulin (ins).